Reading from the N-terminus, the 189-residue chain is Probable nicotinate-nucleotide adenylyltransferase (189 aa).

Belongs to the NadD family.

It carries out the reaction nicotinate beta-D-ribonucleotide + ATP + H(+) = deamido-NAD(+) + diphosphate. It functions in the pathway cofactor biosynthesis; NAD(+) biosynthesis; deamido-NAD(+) from nicotinate D-ribonucleotide: step 1/1. Catalyzes the reversible adenylation of nicotinate mononucleotide (NaMN) to nicotinic acid adenine dinucleotide (NaAD). This Bacillus anthracis (strain CDC 684 / NRRL 3495) protein is Probable nicotinate-nucleotide adenylyltransferase.